The chain runs to 202 residues: MSTFFEPENGMKQNAKTERILDVALELLETEGEFGLTMRQVATQADMSLSNVQYYFKSEDLLLVAMADRYFQRCLTTMAEHPPLSAGRDQHAQLRALLRELLGHGLEISEMCRIFREYWAIATRNETVHGYLKSYYRDLAEVMAEKLAPLASSEKALAVAVSLVIPYVEGYSVTAIAMPESIDTISETLTNVVLEQLRISNS.

Positions 14 to 74 (NAKTERILDV…AMADRYFQRC (61 aa)) constitute an HTH tetR-type domain.

This is an uncharacterized protein from Xanthobacter autotrophicus.